Here is a 633-residue protein sequence, read N- to C-terminus: MFHGTITKELTSHEEWSHYNENIVEDQKDFVFVKYNGLHLKSMENLQSCISLRVCIFSNNFVTDIQPLQGCKKLIKLDLHGNQIKTLPDRTFWNGLKNLKLLYLHDNGFAKLKNICVLSGCVNLVGLTMFDCPVSLKKGYRHVLVNSIWPLKALDHHVISDEEIIQNWHLPERFKTFSQSLFFNICPAPIKGTTYEDEIKNIKHIISRINEILAHNSPVLIIQRWIRGFIVRKHLSPYFTRKRHHDRMIRVLETKLICIGRNNEDKFLEDIFLIKPESNIKGKVAHWKQMRYSPDDFKYSTEYRKHISCLSYELKTKDIAGNSKQPRHHIQKGQNEMKSDSEDEEVDTKFRISAMKIPLCPSRSLKYRAMLKEIKWDYFPEYLQPLPATRQKPQVKRETHEELKERRNFLASQRAGMDLHLFNDIDKYYSEQRQQEEEARKFAATAAAQVAQERARLNTSENLRKKISMARKLMQKDNETIQKGLRHIWKERLNYLEKVRERKSMFLAEKKLNAADQSLVLSLNNERSILLRGIIQVDKLKRDLSEMKAKHFDVIEKREKRKYKQNLLTEMKKLRAEEIHKRHCEERFVIDTLIFQKGCERLEEAKAKVEFINTYYTSKSHKKYHNKTMLNHI.

LRR repeat units lie at residues 51–72 (SLRV…QGCK), 73–94 (KLIK…TFWN), and 98–119 (NLKL…CVLS). The LRRCT domain maps to 132-179 (CPVSLKKGYRHVLVNSIWPLKALDHHVISDEEIIQNWHLPERFKTFSQ). The IQ domain maps to 215 to 244 (HNSPVLIIQRWIRGFIVRKHLSPYFTRKRH). The disordered stretch occupies residues 322–343 (NSKQPRHHIQKGQNEMKSDSED). The stretch at 556 to 616 (EKREKRKYKQ…AKVEFINTYY (61 aa)) forms a coiled coil.

This chain is Leucine-rich repeat and IQ domain-containing protein 3 (Lrriq3), found in Rattus norvegicus (Rat).